The sequence spans 185 residues: Ribosome-recycling factor (185 aa).

Belongs to the RRF family.

The protein localises to the cytoplasm. In terms of biological role, responsible for the release of ribosomes from messenger RNA at the termination of protein biosynthesis. May increase the efficiency of translation by recycling ribosomes from one round of translation to another. This Sodalis glossinidius (strain morsitans) protein is Ribosome-recycling factor.